Here is a 413-residue protein sequence, read N- to C-terminus: Multifunctional CCA protein (413 aa).

ATP-binding residues include glycine 8 and arginine 11. 2 residues coordinate CTP: glycine 8 and arginine 11. The Mg(2+) site is built by aspartate 21 and aspartate 23. Residues arginine 91, arginine 143, and arginine 146 each contribute to the ATP site. Residues arginine 91, arginine 143, and arginine 146 each coordinate CTP. One can recognise an HD domain in the interval 232–333; it reads TGVHVMMVVD…VRLFERSDAL (102 aa).

This sequence belongs to the tRNA nucleotidyltransferase/poly(A) polymerase family. Bacterial CCA-adding enzyme type 1 subfamily. As to quaternary structure, monomer. Can also form homodimers and oligomers. It depends on Mg(2+) as a cofactor. Ni(2+) serves as cofactor.

The catalysed reaction is a tRNA precursor + 2 CTP + ATP = a tRNA with a 3' CCA end + 3 diphosphate. It carries out the reaction a tRNA with a 3' CCA end + 2 CTP + ATP = a tRNA with a 3' CCACCA end + 3 diphosphate. Its function is as follows. Catalyzes the addition and repair of the essential 3'-terminal CCA sequence in tRNAs without using a nucleic acid template. Adds these three nucleotides in the order of C, C, and A to the tRNA nucleotide-73, using CTP and ATP as substrates and producing inorganic pyrophosphate. tRNA 3'-terminal CCA addition is required both for tRNA processing and repair. Also involved in tRNA surveillance by mediating tandem CCA addition to generate a CCACCA at the 3' terminus of unstable tRNAs. While stable tRNAs receive only 3'-terminal CCA, unstable tRNAs are marked with CCACCA and rapidly degraded. In Burkholderia cenocepacia (strain ATCC BAA-245 / DSM 16553 / LMG 16656 / NCTC 13227 / J2315 / CF5610) (Burkholderia cepacia (strain J2315)), this protein is Multifunctional CCA protein.